Consider the following 318-residue polypeptide: Bis(5'-nucleosyl)-tetraphosphatase, symmetrical (318 aa).

A disordered region spans residues Pro-269–Asp-318. Positions Ala-282–Gly-297 are enriched in basic residues. Positions Asn-298–Pro-311 are enriched in low complexity.

It belongs to the Ap4A hydrolase family.

It catalyses the reaction P(1),P(4)-bis(5'-adenosyl) tetraphosphate + H2O = 2 ADP + 2 H(+). In terms of biological role, hydrolyzes diadenosine 5',5'''-P1,P4-tetraphosphate to yield ADP. This is Bis(5'-nucleosyl)-tetraphosphatase, symmetrical from Xanthomonas euvesicatoria pv. vesicatoria (strain 85-10) (Xanthomonas campestris pv. vesicatoria).